The following is a 419-amino-acid chain: S-adenosylmethionine synthase (419 aa).

His15 lines the ATP pocket. A Mg(2+)-binding site is contributed by Asp17. Glu43 is a K(+) binding site. L-methionine is bound by residues Glu56 and Gln100. The interval Gln100 to Glu110 is flexible loop. Residues Asp171–Lys173, Lys248–Phe249, Asp257, Arg263–Lys264, Ala280, and Lys284 contribute to the ATP site. Asp257 contacts L-methionine. Lys288 contacts L-methionine.

This sequence belongs to the AdoMet synthase family. In terms of assembly, homotetramer; dimer of dimers. Mg(2+) serves as cofactor. Requires K(+) as cofactor.

The protein resides in the cytoplasm. The enzyme catalyses L-methionine + ATP + H2O = S-adenosyl-L-methionine + phosphate + diphosphate. It functions in the pathway amino-acid biosynthesis; S-adenosyl-L-methionine biosynthesis; S-adenosyl-L-methionine from L-methionine: step 1/1. Catalyzes the formation of S-adenosylmethionine (AdoMet) from methionine and ATP. The overall synthetic reaction is composed of two sequential steps, AdoMet formation and the subsequent tripolyphosphate hydrolysis which occurs prior to release of AdoMet from the enzyme. The polypeptide is S-adenosylmethionine synthase (Prochlorococcus marinus (strain MIT 9303)).